Consider the following 230-residue polypeptide: Orotidine 5'-phosphate decarboxylase (230 aa).

Residues D10, K31, 58-67 (DLKLHDIPNT), T117, R179, Q188, G208, and R209 each bind substrate. The active-site Proton donor is K60.

This sequence belongs to the OMP decarboxylase family. Type 1 subfamily. Homodimer.

It carries out the reaction orotidine 5'-phosphate + H(+) = UMP + CO2. The protein operates within pyrimidine metabolism; UMP biosynthesis via de novo pathway; UMP from orotate: step 2/2. Functionally, catalyzes the decarboxylation of orotidine 5'-monophosphate (OMP) to uridine 5'-monophosphate (UMP). The chain is Orotidine 5'-phosphate decarboxylase from Staphylococcus epidermidis (strain ATCC 12228 / FDA PCI 1200).